The primary structure comprises 441 residues: MKKFFQEFKADIKFKSAGPGQKLKESVGEKAHKEKPNQPAPRPPRQGPTNEAQMAAAAALARLEQKQSRAWGPTSQDTIRNQVRKELQAEATVSGSPEAPGTNVVSEPREEGSAHLAVPGVYFTCPLTGATLRKDQRDACIKEAILLHFSTDPVAASIMKIYTFNKDQDRVKLGVDTIAKYLDNIHLHPEEEKYRKIKLQNKVFQERINCLEGTHEFFEAIGFQKVLLPAQDQEDPEEFYVLSETTLAQPQSLERHKEQLLAAEPVRAKLDRQRRVFQPSPLASQFELPGDFFNLTAEEIKREQRLRSEAVERLSVLRTKAMREKEEQRGLRKYNYTLLRVRLPDGCLLQGTFYARERLGAVYGFVREALQSDWLPFELLASGGQKLSEDENLALNECGLVPSALLTFSWDMAVLEDIKAAGAEPDSILKPELLSAIEKLL.

The segment at 1-10 (MKKFFQEFKA) is mediates interaction with LMAN1. The residue at position 2 (K2) is an N-acetylalanine. 2 disordered regions span residues 13-79 (KFKS…QDTI) and 87-106 (LQAE…NVVS). The span at 22 to 36 (KLKESVGEKAHKEKP) shows a compositional bias: basic and acidic residues. Residues 51–63 (EAQMAAAAALARL) are VCP/p97-interacting motif (VIM). The span at 52 to 61 (AQMAAAAALA) shows a compositional bias: low complexity. Residue S96 is modified to Phosphoserine. Residues 175 to 244 (VDTIAKYLDN…DPEEFYVLSE (70 aa)) form the PUB domain. One can recognise a UBX domain in the interval 332-408 (RKYNYTLLRV…GLVPSALLTF (77 aa)).

Interacts with VCP through the PUB domain (via C-terminus) and VIM motif (via N-terminus); the interaction is direct. Forms a ternary complex with CAV1 and VCP. Interacts with SYVN1. Interacts with HERPUD1. Interacts with VCPKMT. May interact with DERL1. Interacts with PLAA, VCP and YOD1; may form a complex involved in macroautophagy. Interacts with LMAN1. In terms of tissue distribution, enhanced expression in testis.

The protein resides in the cytoplasm. It is found in the cytosol. It localises to the membrane. Its subcellular location is the nucleus. The protein localises to the cytoskeleton. The protein resides in the microtubule organizing center. It is found in the centrosome. It localises to the early endosome membrane. Its subcellular location is the late endosome membrane. The protein localises to the lysosome membrane. May negatively regulate the ATPase activity of VCP, an ATP-driven segregase that associates with different cofactors to control a wide variety of cellular processes. As a cofactor of VCP, it may play a role in the transport of CAV1 to lysosomes for degradation. It may also play a role in endoplasmic reticulum-associated degradation (ERAD) of misfolded proteins. Together with VCP and other cofactors, it may play a role in macroautophagy, regulating for instance the clearance of damaged lysosomes. The sequence is that of UBX domain-containing protein 6 from Homo sapiens (Human).